Reading from the N-terminus, the 146-residue chain is D-aminoacyl-tRNA deacylase (146 aa).

Positions 137–138 (GP) match the Gly-cisPro motif, important for rejection of L-amino acids motif.

It belongs to the DTD family. Homodimer.

Its subcellular location is the cytoplasm. The enzyme catalyses glycyl-tRNA(Ala) + H2O = tRNA(Ala) + glycine + H(+). It carries out the reaction a D-aminoacyl-tRNA + H2O = a tRNA + a D-alpha-amino acid + H(+). In terms of biological role, an aminoacyl-tRNA editing enzyme that deacylates mischarged D-aminoacyl-tRNAs. Also deacylates mischarged glycyl-tRNA(Ala), protecting cells against glycine mischarging by AlaRS. Acts via tRNA-based rather than protein-based catalysis; rejects L-amino acids rather than detecting D-amino acids in the active site. By recycling D-aminoacyl-tRNA to D-amino acids and free tRNA molecules, this enzyme counteracts the toxicity associated with the formation of D-aminoacyl-tRNA entities in vivo and helps enforce protein L-homochirality. This is D-aminoacyl-tRNA deacylase from Bacillus cereus (strain ATCC 14579 / DSM 31 / CCUG 7414 / JCM 2152 / NBRC 15305 / NCIMB 9373 / NCTC 2599 / NRRL B-3711).